Here is a 1133-residue protein sequence, read N- to C-terminus: ATP-dependent DNA helicase homolog MER3 (1133 aa).

The 196-residue stretch at 34–229 (PLCFHSDINM…WLKVPTAGIK (196 aa)) folds into the Helicase ATP-binding domain. Residue 47–54 (APTGSGKT) coordinates ATP. The DEVH box motif lies at 165–168 (DEVH). A Helicase C-terminal domain is found at 263-460 (YIYDILMQYS…CLIEHLTAEI (198 aa)). Residues 536–847 (EPGRLMTKYY…FEEYIGIDLH (312 aa)) form the SEC63 domain. Positions 878–919 (ACIADDDNPVTSGPSNRKDKKDDMPSFKLIDDDSEEEKEPYV) are disordered. Positions 893–908 (NRKDKKDDMPSFKLID) are enriched in basic and acidic residues. Residues 909-919 (DDSEEEKEPYV) are compositionally biased toward acidic residues.

The protein belongs to the helicase family. SKI2 subfamily. In terms of tissue distribution, expressed in meiocytes during meiosis.

It is found in the nucleus. It catalyses the reaction Couples ATP hydrolysis with the unwinding of duplex DNA by translocating in the 3'-5' direction.. The enzyme catalyses ATP + H2O = ADP + phosphate + H(+). Functionally, DNA helicase required for crossover formation, complete synapsis of homologous chromosomes and bivalent formation during meiosis. Is specific to recombination events resulting in interference-sensitive crossovers (class I meiotic crossover). In Arabidopsis thaliana (Mouse-ear cress), this protein is ATP-dependent DNA helicase homolog MER3.